The sequence spans 174 residues: ATP synthase subunit b (174 aa).

The chain crosses the membrane as a helical span at residues 18–38 (IIVVSGSFLILMFLLKHFAWG).

The protein belongs to the ATPase B chain family. As to quaternary structure, F-type ATPases have 2 components, F(1) - the catalytic core - and F(0) - the membrane proton channel. F(1) has five subunits: alpha(3), beta(3), gamma(1), delta(1), epsilon(1). F(0) has three main subunits: a(1), b(2) and c(10-14). The alpha and beta chains form an alternating ring which encloses part of the gamma chain. F(1) is attached to F(0) by a central stalk formed by the gamma and epsilon chains, while a peripheral stalk is formed by the delta and b chains.

The protein localises to the cell membrane. Its function is as follows. F(1)F(0) ATP synthase produces ATP from ADP in the presence of a proton or sodium gradient. F-type ATPases consist of two structural domains, F(1) containing the extramembraneous catalytic core and F(0) containing the membrane proton channel, linked together by a central stalk and a peripheral stalk. During catalysis, ATP synthesis in the catalytic domain of F(1) is coupled via a rotary mechanism of the central stalk subunits to proton translocation. In terms of biological role, component of the F(0) channel, it forms part of the peripheral stalk, linking F(1) to F(0). This Enterococcus hirae (strain ATCC 9790 / DSM 20160 / JCM 8729 / LMG 6399 / NBRC 3181 / NCIMB 6459 / NCDO 1258 / NCTC 12367 / WDCM 00089 / R) protein is ATP synthase subunit b.